We begin with the raw amino-acid sequence, 445 residues long: Protein phosphatase 2C 53 (445 aa).

The 312-residue stretch at 124–435 folds into the PPM-type phosphatase domain; sequence LWGLESICGR…DNITVVVIDL (312 aa). Mn(2+) is bound by residues aspartate 180, glycine 181, aspartate 362, and aspartate 426.

Belongs to the PP2C family. As to quaternary structure, interacts with PYL10, SAPK8 and SAPK10. Binding to PYL10 is dependent on the presence of abscisic acid (ABA). Interacts with PYL3, PYL5, PYL9 and PYL10. Binding to PYL9 and PYL10 is dependent on the presence of ABA. Mg(2+) is required as a cofactor. Requires Mn(2+) as cofactor. In terms of tissue distribution, expressed in leaf blades, leaf sheaths and lamina joints. Expressed at low levels in roots, stems, flowers and panicles.

It is found in the cytoplasm. It localises to the cytosol. The protein localises to the nucleus. The enzyme catalyses O-phospho-L-seryl-[protein] + H2O = L-seryl-[protein] + phosphate. It catalyses the reaction O-phospho-L-threonyl-[protein] + H2O = L-threonyl-[protein] + phosphate. Its activity is regulated as follows. Repressed by abscisic acid-bound PYL1. Functionally, protein phosphatase that acts as a negative regulator of abscisic acid (ABA) signaling. Involved in the regulation of root architecture development and drought resistance. Can dephosphorylate SAPK8 and SAPK10 in vitro. Together with PYL10, SAPK8 and SAPK10, may form an ABA signaling module involved in stress response. The protein is Protein phosphatase 2C 53 of Oryza sativa subsp. japonica (Rice).